Here is a 258-residue protein sequence, read N- to C-terminus: tRNA pseudouridine synthase A (258 aa).

Aspartate 53 (nucleophile) is an active-site residue. Tyrosine 111 lines the substrate pocket.

It belongs to the tRNA pseudouridine synthase TruA family. In terms of assembly, homodimer.

It catalyses the reaction uridine(38/39/40) in tRNA = pseudouridine(38/39/40) in tRNA. In terms of biological role, formation of pseudouridine at positions 38, 39 and 40 in the anticodon stem and loop of transfer RNAs. The protein is tRNA pseudouridine synthase A of Streptococcus agalactiae serotype V (strain ATCC BAA-611 / 2603 V/R).